The following is a 335-amino-acid chain: Glyceraldehyde-3-phosphate dehydrogenase (335 aa).

Residues 10–11 (RI), D31, R75, and T122 each bind NAD(+). D-glyceraldehyde 3-phosphate-binding positions include 152–154 (SCT) and T183. C153 serves as the catalytic Nucleophile. Residue N184 participates in NAD(+) binding. D-glyceraldehyde 3-phosphate is bound by residues R198, 211 to 212 (TG), and R234. N318 serves as a coordination point for NAD(+).

This sequence belongs to the glyceraldehyde-3-phosphate dehydrogenase family. In terms of assembly, homotetramer.

The protein localises to the cytoplasm. It carries out the reaction D-glyceraldehyde 3-phosphate + phosphate + NAD(+) = (2R)-3-phospho-glyceroyl phosphate + NADH + H(+). It functions in the pathway carbohydrate degradation; glycolysis; pyruvate from D-glyceraldehyde 3-phosphate: step 1/5. Catalyzes the oxidative phosphorylation of glyceraldehyde 3-phosphate (G3P) to 1,3-bisphosphoglycerate (BPG) using the cofactor NAD. The first reaction step involves the formation of a hemiacetal intermediate between G3P and a cysteine residue, and this hemiacetal intermediate is then oxidized to a thioester, with concomitant reduction of NAD to NADH. The reduced NADH is then exchanged with the second NAD, and the thioester is attacked by a nucleophilic inorganic phosphate to produce BPG. The polypeptide is Glyceraldehyde-3-phosphate dehydrogenase (gap) (Borreliella burgdorferi (strain ATCC 35210 / DSM 4680 / CIP 102532 / B31) (Borrelia burgdorferi)).